Here is a 246-residue protein sequence, read N- to C-terminus: 14-3-3 protein eta (246 aa).

G2 bears the N-acetylglycine mark. S25 and S59 each carry phosphoserine.

The protein belongs to the 14-3-3 family. Homodimer. Interacts with many nuclear hormone receptors and cofactors including AR, ESR1, ESR2, MC2R, NR3C1, NRIP1, PPARBP and THRA. Interacts with ABL1 (phosphorylated form); the interaction retains it in the cytoplasm. Interacts with ARHGEF28 and CDK16. Weakly interacts with CDKN1B. Interacts with GAB2. Interacts with KCNK18 in a phosphorylation-dependent manner. Interacts with SAMSN1. Interacts with the 'Ser-241' phosphorylated form of PDPK1. Interacts with the 'Thr-369' phosphorylated form of DAPK2. Interacts with PI4KB, TBC1D22A and TBC1D22B. Interacts with SLITRK1. Interacts with MEFV. In terms of processing, phosphorylated on Ser-59 by protein kinase C delta type catalytic subunit in a sphingosine-dependent fashion. As to expression, expressed mainly in the brain and present in other tissues albeit at lower levels.

Its function is as follows. Adapter protein implicated in the regulation of a large spectrum of both general and specialized signaling pathways. Binds to a large number of partners, usually by recognition of a phosphoserine or phosphothreonine motif. Binding generally results in the modulation of the activity of the binding partner. Negatively regulates the kinase activity of PDPK1. The protein is 14-3-3 protein eta (YWHAH) of Homo sapiens (Human).